Here is a 173-residue protein sequence, read N- to C-terminus: Disulfide bond formation protein B (173 aa).

Over 1–14 (MIEFLRRIAAHRLA) the chain is Cytoplasmic. Residues 15-31 (WSLLAASALFLELSALF) traverse the membrane as a helical segment. Residues 32–49 (FQHVLGLHPCVMCVYERI) lie on the Periplasmic side of the membrane. An intrachain disulfide couples cysteine 41 to cysteine 44. Residues 50–65 (ATLGVLTAGLLGMVAP) traverse the membrane as a helical segment. Over 66-72 (QKWYVRW) the chain is Cytoplasmic. The chain crosses the membrane as a helical span at residues 73–90 (SALLLWGSSAFWGLKLAL). At 91–145 (KHVDYQVNPSPFNVCEGFVDFPSWAPLDQWIPWMFYPDGDCSEVTWQFLSFSMPQ) the chain is on the periplasmic side. A disulfide bridge connects residues cysteine 105 and cysteine 131. A helical transmembrane segment spans residues 146-164 (WLVAIFAVYLLVFVVVAIG). Residues 165–173 (NLVKGRCCS) lie on the Cytoplasmic side of the membrane.

The protein belongs to the DsbB family.

It is found in the cell inner membrane. Functionally, required for disulfide bond formation in some periplasmic proteins. Acts by oxidizing the DsbA protein. The polypeptide is Disulfide bond formation protein B (Aeromonas hydrophila subsp. hydrophila (strain ATCC 7966 / DSM 30187 / BCRC 13018 / CCUG 14551 / JCM 1027 / KCTC 2358 / NCIMB 9240 / NCTC 8049)).